The following is a 468-amino-acid chain: Interleukin-9 receptor (468 aa).

An N-terminal signal peptide occupies residues 1 to 37; it reads MALGRCIAEGWTLERVAVKQVSWFLIYSWVCSGVCRG. At 38–270 the chain is on the extracellular side; the sequence is VSVPEQGGGG…GLLVPRWQWS (233 aa). Residues Asn116 and Asn155 are each glycosylated (N-linked (GlcNAc...) asparagine). The Fibronectin type-III domain occupies 148-256; sequence PPSDLQSNVS…WSQPVSFPSP (109 aa). A WSXWS motif motif is present at residues 244–248; the sequence is WSEWS. The chain crosses the membrane as a helical span at residues 271 to 291; sequence ASILVVVPIFLLLTGFVHLLF. The Cytoplasmic segment spans residues 292–468; sequence KLSPRLKRIF…PVALPVSSRA (177 aa). A Box 1 motif motif is present at residues 301-309; the sequence is FYQNIPSPE. The tract at residues 407-426 is disordered; that stretch reads PQEDWAPLGSARPPPPDSDS.

It belongs to the type I cytokine receptor family. Type 4 subfamily. Interacts with IL9.

It localises to the cell membrane. The protein resides in the secreted. Functionally, plays an important role in the immune response against parasites by acting as a receptor of IL9. The protein is Interleukin-9 receptor (Il9r) of Mus musculus (Mouse).